Here is a 125-residue protein sequence, read N- to C-terminus: ATP synthase epsilon chain (125 aa).

It belongs to the ATPase epsilon chain family. As to quaternary structure, F-type ATPases have 2 components, CF(1) - the catalytic core - and CF(0) - the membrane proton channel. CF(1) has five subunits: alpha(3), beta(3), gamma(1), delta(1), epsilon(1). CF(0) has three main subunits: a, b and c.

It localises to the cell inner membrane. Functionally, produces ATP from ADP in the presence of a proton gradient across the membrane. This Aliarcobacter butzleri (strain RM4018) (Arcobacter butzleri) protein is ATP synthase epsilon chain.